The following is a 305-amino-acid chain: Secreted mono- and diacylglycerol lipase A (305 aa).

The first 26 residues, 1 to 26 (MRLSFFTALSAVASLGYALPGKLQSR), serve as a signal peptide directing secretion. 2 disulfides stabilise this stretch: C62–C67 and C129–C132. The active-site Nucleophile is the S171. D225 functions as the Charge relay system in the catalytic mechanism. A glycan (N-linked (GlcNAc...) asparagine) is linked at N251. H285 functions as the Charge relay system in the catalytic mechanism. The propeptide at 303-305 (KRV) is removed in mature form.

The protein belongs to the AB hydrolase superfamily. Lipase family. Class 3 subfamily. Multiple forms of this lipase are due to the presence of different carbohydrates, which may contribute to the stability of this lipase but not to the enzyme activity.

Its subcellular location is the secreted. The enzyme catalyses a monoacylglycerol + H2O = glycerol + a fatty acid + H(+). It carries out the reaction a diacylglycerol + H2O = a monoacylglycerol + a fatty acid + H(+). Both Fe(3+) and Hg(2+) inhibit the activity significantly. Secreted lipase strictly specific to mono- and diacylglycerol, but not triacylglycerol. Hydrolyzes long-chain monoacylglycerols most efficiently with the highest activities observed on 1- and 3- monopalmitoyl-sn-glycerol or 1-monostearoyl-rac-glycerol. Prefers to attack alpha positions to beta positions of monoacylglycerol, but shows no stereospecificity on mono- and diacylglycerol. This chain is Secreted mono- and diacylglycerol lipase A, found in Penicillium camembertii.